Here is a 707-residue protein sequence, read N- to C-terminus: SPX domain-containing membrane protein At4g11810 (707 aa).

In terms of domain architecture, SPX spans 2–145; the sequence is VAFGKKLKER…GYRFTNYYVK (144 aa). The next 6 helical transmembrane spans lie at 252 to 272, 283 to 303, 320 to 340, 342 to 361, 380 to 400, and 416 to 436; these read FMSL…TYII, LGAA…AQLF, LIFS…AYDF, SLAL…ARAV, AGFV…AGLL, and LPGW…AISF. Residues 481 to 498 are compositionally biased toward acidic residues; that stretch reads EETEHDEEDDGDGSEESS. Residues 481 to 503 form a disordered region; that stretch reads EETEHDEEDDGDGSEESSDDSRK. 5 helical membrane-spanning segments follow: residues 523–543, 557–577, 586–606, 614–634, and 679–699; these read LLIY…SSVV, IFLF…GSYI, ILLA…HVVI, VISG…NLSL, and MLLN…ILAT.

The protein belongs to the major facilitator superfamily.

It is found in the membrane. The polypeptide is SPX domain-containing membrane protein At4g11810 (Arabidopsis thaliana (Mouse-ear cress)).